The sequence spans 119 residues: Small ribosomal subunit protein bS16 (119 aa).

Over residues 96–107 the composition is skewed to basic residues; the sequence is RKKRRAYRQRRS. The tract at residues 96–119 is disordered; the sequence is RKKRRAYRQRRSTQREEAAKDATK. Residues 108–119 show a composition bias toward basic and acidic residues; it reads TQREEAAKDATK.

Belongs to the bacterial ribosomal protein bS16 family.

The chain is Small ribosomal subunit protein bS16 from Chlamydia pneumoniae (Chlamydophila pneumoniae).